The following is a 626-amino-acid chain: MVIWNNDDDDFLEIDNFQSSPRSSPIHAMQCRVENLAGVAVTTSSLSSPTETTDLVQMGFSDEVFATLFDMGFPVEMISRAIKETGPNVETSVIIDTISKYSSDCEAGSSKSKAIDHFLAMGFDEEKVVKAIQEHGEDNMEAIANALLSCPEAKKLPAAVEEEDGIDWSSSDDDTNYTDMLNSDDEKDPNSNENGSKIRSLVKMGFSELEASLAVERCGENVDIAELTDFLCAAQMAREFSEFYTEHEEQKPRHNIKKRRFESKGEPRSSVDDEPIRLPNPMIGFGVPNEPGLITHRSLPELARGPPFFYYENVALTPKGVWETISRHLFEIPPEFVDSKYFCVAARKRGYIHNLPINNRFQIQPPPKYTIHDAFPLSKRWWPEWDKRTKLNCILTCTGSAQLTNRIRVALEPYNEEPEPPKHVQRYVIDQCKKWNLVWVGKNKAAPLEPDEMESILGFPKNHTRGGGMSRTERFKSLGNSFQVDTVAYHLSVLKPIFPHGINVLSLFTGIGGGEVALHRLQIKMKLVVSVEISKVNRNILKDFWEQTNQTGELIEFSDIQHLTNDTIEGLMEKYGGFDLVIGGSPCNNLAGGNRVSRVGLEGDQSSLFFEYCRILEVVRARMRGS.

2 consecutive UBA domains span residues 59–101 and 109–150; these read GFSD…ISKY and SSKS…LLSC. Residues 160–187 are compositionally biased toward acidic residues; it reads VEEEDGIDWSSSDDDTNYTDMLNSDDEK. Disordered stretches follow at residues 160 to 196 and 245 to 282; these read VEEE…ENGS and TEHE…PNPM. The UBA 3 domain maps to 190-232; sequence NSNENGSKIRSLVKMGFSELEASLAVERCGENVDIAELTDFLC. The segment covering 262-276 has biased composition (basic and acidic residues); that stretch reads ESKGEPRSSVDDEPI. In terms of domain architecture, SAM-dependent MTase DRM-type spans 295-626; that stretch reads THRSLPELAR…EVVRARMRGS (332 aa).

This sequence belongs to the class I-like SAM-binding methyltransferase superfamily. DRM-methyltransferase family. Interacts with RDM1. Expressed in roots, inflorescences and at lower levels in leaves.

The protein localises to the nucleus. Its subcellular location is the nucleoplasm. The catalysed reaction is a 2'-deoxycytidine in DNA + S-adenosyl-L-methionine = a 5-methyl-2'-deoxycytidine in DNA + S-adenosyl-L-homocysteine + H(+). Involved in de novo DNA methylation. Controls asymmetric and CpNpG methylation. Required for FWA gene silencing but not for the maintenance of SUP gene silencing. Functionally redundant to CMT3 to maintain non-CpG methylation. Involved in RNA-directed DNA methylation (RdDM). Acts as major DNA methyltransferase in the RdDM pathway, and is essential for RNA-directed de novo DNA methylation of cytosines in all sequence contexts. Associates with long non-coding RNA (lncRNA) produced by RNA polymerase V (Pol V). This association is dependent on AGO4 and IDN2, and results in DNA methylation of RdDM target loci. This Arabidopsis thaliana (Mouse-ear cress) protein is DNA (cytosine-5)-methyltransferase DRM2 (DRM2).